Here is a 953-residue protein sequence, read N- to C-terminus: Coatomer subunit beta-1 (953 aa).

5 HEAT repeats span residues 49-87, 93-127, 128-165, 314-351, and 393-430; these read ETLP…RDVA, PEMI…LNEP, ELLE…LPHG, DVMV…PRNV, and EVAG…TNPK.

As to quaternary structure, oligomeric complex that consists of at least the alpha, beta, beta', gamma, delta, epsilon and zeta subunits.

The protein resides in the cytoplasm. It localises to the golgi apparatus membrane. Its subcellular location is the cytoplasmic vesicle. It is found in the COPI-coated vesicle membrane. Its function is as follows. The coatomer is a cytosolic protein complex that binds to dilysine motifs and reversibly associates with Golgi non-clathrin-coated vesicles, which further mediate biosynthetic protein transport from the ER, via the Golgi up to the trans Golgi network. Coatomer complex is required for budding from Golgi membranes, and is essential for the retrograde Golgi-to-ER transport of dilysine-tagged proteins. The chain is Coatomer subunit beta-1 from Oryza sativa subsp. japonica (Rice).